Consider the following 103-residue polypeptide: Large ribosomal subunit protein bL21 (103 aa).

Belongs to the bacterial ribosomal protein bL21 family. In terms of assembly, part of the 50S ribosomal subunit. Contacts protein L20.

This protein binds to 23S rRNA in the presence of protein L20. The polypeptide is Large ribosomal subunit protein bL21 (Nocardia farcinica (strain IFM 10152)).